The chain runs to 180 residues: MTQHHDTAEVSRVIATLTREVADFPEPGIQFKDLTPLLADARGLRVVTDALADIASGADLVAGLDARGFLLGAAVATRLGTGVLAVRKGGKLPPPVHGATYQLEYGTATLEIPAEGIDIAGRNVVIIDDVLATGGTLAAAARLLGDCGANVTGAGVVLELEALRGREAVAPLGVRSLHII.

This sequence belongs to the purine/pyrimidine phosphoribosyltransferase family. In terms of assembly, homodimer.

The protein localises to the cytoplasm. The enzyme catalyses AMP + diphosphate = 5-phospho-alpha-D-ribose 1-diphosphate + adenine. It functions in the pathway purine metabolism; AMP biosynthesis via salvage pathway; AMP from adenine: step 1/1. Its function is as follows. Catalyzes a salvage reaction resulting in the formation of AMP, that is energically less costly than de novo synthesis. This is Adenine phosphoribosyltransferase from Mycolicibacterium smegmatis (strain ATCC 700084 / mc(2)155) (Mycobacterium smegmatis).